The following is a 394-amino-acid chain: Imidazolonepropionase (394 aa).

His61 and His63 together coordinate Fe(3+). Zn(2+) contacts are provided by His61 and His63. Positions 70, 133, and 164 each coordinate 4-imidazolone-5-propanoate. Residue Tyr133 coordinates N-formimidoyl-L-glutamate. His225 lines the Fe(3+) pocket. His225 contacts Zn(2+). Glu228 is a binding site for 4-imidazolone-5-propanoate. Fe(3+) is bound at residue Asp299. Asp299 lines the Zn(2+) pocket.

This sequence belongs to the metallo-dependent hydrolases superfamily. HutI family. Zn(2+) serves as cofactor. The cofactor is Fe(3+).

Its subcellular location is the cytoplasm. It carries out the reaction 4-imidazolone-5-propanoate + H2O = N-formimidoyl-L-glutamate. Its pathway is amino-acid degradation; L-histidine degradation into L-glutamate; N-formimidoyl-L-glutamate from L-histidine: step 3/3. Its function is as follows. Catalyzes the hydrolytic cleavage of the carbon-nitrogen bond in imidazolone-5-propanoate to yield N-formimidoyl-L-glutamate. It is the third step in the universal histidine degradation pathway. The sequence is that of Imidazolonepropionase from Picrophilus torridus (strain ATCC 700027 / DSM 9790 / JCM 10055 / NBRC 100828 / KAW 2/3).